A 330-amino-acid chain; its full sequence is Erlin-2-B (330 aa).

At Met1–Ser2 the chain is on the cytoplasmic side. Residues His3–Ile23 traverse the membrane as a helical segment. Over His24–Lys330 the chain is Lumenal. An N-linked (GlcNAc...) asparagine glycan is attached at Asn106. A disordered region spans residues Ser308–Lys330. The segment covering Lys319–Lys330 has biased composition (basic and acidic residues).

It belongs to the band 7/mec-2 family.

It localises to the endoplasmic reticulum membrane. Functionally, mediates the endoplasmic reticulum-associated degradation (ERAD) of inositol 1,4,5-trisphosphate receptors (IP3Rs). Promotes sterol-accelerated ERAD of HMGCR. Involved in regulation of cellular cholesterol homeostasis by regulation the SREBP signaling pathway. In Xenopus laevis (African clawed frog), this protein is Erlin-2-B (erlin2-b).